The following is a 131-amino-acid chain: Small ribosomal subunit protein uS11 (131 aa).

The protein belongs to the universal ribosomal protein uS11 family. As to quaternary structure, part of the 30S ribosomal subunit. Interacts with proteins S7 and S18. Binds to IF-3. Interacts with VmlR. Interacts with BrxC.

Its function is as follows. Located on the platform of the 30S subunit, it bridges several disparate RNA helices of the 16S rRNA. Forms part of the Shine-Dalgarno cleft in the 70S ribosome. The protein is Small ribosomal subunit protein uS11 of Bacillus subtilis (strain 168).